We begin with the raw amino-acid sequence, 109 residues long: uncharacterized protein (109 aa).

Residues 78-98 traverse the membrane as a helical segment; sequence YTCIMYIGLLCMFVLLYMTVI.

Its subcellular location is the membrane. This is an uncharacterized protein from Saccharomyces cerevisiae (strain ATCC 204508 / S288c) (Baker's yeast).